Here is a 602-residue protein sequence, read N- to C-terminus: Major facilitator superfamily multidrug transporter mfsB (602 aa).

A run of 12 helical transmembrane segments spans residues 29 to 49, 67 to 87, 98 to 118, 128 to 148, 160 to 180, 201 to 221, 329 to 349, 378 to 398, 411 to 431, 439 to 459, 468 to 486, and 505 to 525; these read FVLA…FPYV, LYAG…GMFW, PVLI…GFAP, ALGG…AEIV, IMPF…GALA, FLLP…VGFL, IVAY…IPVF, FMLA…FPFV, VLLV…LPSI, LALI…AILL, VLGS…SRAL, and IIAW…SFWM. The segment at 527 to 602 is disordered; the sequence is ESEPRRDSEK…RSNPLAFAED (76 aa). The segment covering 528-538 has biased composition (basic and acidic residues); sequence SEPRRDSEKAG.

It belongs to the major facilitator superfamily.

It localises to the membrane. Major facilitator superfamily transporter that may be involved in A.fumigatus adaptation to azoles such as vorizonazole. In Aspergillus fumigatus (strain ATCC MYA-4609 / CBS 101355 / FGSC A1100 / Af293) (Neosartorya fumigata), this protein is Major facilitator superfamily multidrug transporter mfsB.